The following is an 868-amino-acid chain: Protein translocase subunit SecA (868 aa).

Residues Gln88, 106 to 110 (GEGKT), and Asp509 contribute to the ATP site. The segment covering 816–827 (NAENEPLNYNNQ) has biased composition (polar residues). The disordered stretch occupies residues 816–868 (NAENEPLNYNNQGEDENFTPEKKIPRNAPCPCGSGKKYKDCHGKSGPKKGIFA). Cys845, Cys847, Cys856, and His857 together coordinate Zn(2+).

This sequence belongs to the SecA family. As to quaternary structure, monomer and homodimer. Part of the essential Sec protein translocation apparatus which comprises SecA, SecYEG and auxiliary proteins SecDF-YajC and YidC. Zn(2+) serves as cofactor.

The protein resides in the cell inner membrane. It is found in the cytoplasm. It carries out the reaction ATP + H2O + cellular proteinSide 1 = ADP + phosphate + cellular proteinSide 2.. In terms of biological role, part of the Sec protein translocase complex. Interacts with the SecYEG preprotein conducting channel. Has a central role in coupling the hydrolysis of ATP to the transfer of proteins into and across the cell membrane, serving as an ATP-driven molecular motor driving the stepwise translocation of polypeptide chains across the membrane. The chain is Protein translocase subunit SecA from Campylobacter concisus (strain 13826).